The following is a 403-amino-acid chain: Zinc finger CCHC domain-containing protein 3 (403 aa).

Residues 1–158 (MATGGGAEEE…PLQDEPAAAA (158 aa)) form a disordered region. Basic and acidic residues-rich tracts occupy residues 26–38 (ARGE…REKM) and 47–65 (LAEK…REEE). The segment covering 67–79 (GGGGGSAGLGGPA) has biased composition (gly residues). The span at 95–121 (GDPKGRRRDPAGEAVDPRKKKGAAEAG) shows a compositional bias: basic and acidic residues. Low complexity predominate over residues 128 to 139 (AAAAAMATPARP). At Tyr-201 the chain carries Phosphotyrosine. 3 consecutive CCHC-type zinc fingers follow at residues 335-350 (CFKC…SCTQ), 352-368 (RCFR…YCRK), and 372-387 (CNLC…QCPK).

Interacts with CGAS. Interacts with RIGI. Interacts with IFIH1/MDA5.

It localises to the cytoplasm. In terms of biological role, nucleic acid-binding protein involved in innate immune response to DNA and RNA viruses. Binds DNA and RNA in the cytoplasm and acts by promoting recognition of viral nucleic acids by virus sensors, such as RIGI, IFIH1/MDA5 and CGAS. Acts as a co-sensor for recognition of double-stranded DNA (dsDNA) by cGAS in the cytoplasm, thereby playing a role in innate immune response to cytosolic dsDNA and DNA virus. Binds dsDNA and probably acts by promoting sensing of dsDNA by CGAS, leading to enhance CGAS oligomerization and activation. Promotes sensing of viral RNA by RIGI-like receptors proteins RIGI and IFIH1/MDA5 via two mechanisms: binds double-stranded RNA (dsRNA), enhancing the binding of RIGI and IFIH1/MDA5 to dsRNA and promotes 'Lys-63'-linked ubiquitination and subsequent activation of RIGI and IFIH1/MDA5. This Homo sapiens (Human) protein is Zinc finger CCHC domain-containing protein 3.